We begin with the raw amino-acid sequence, 298 residues long: Acetylglutamate kinase (298 aa).

Substrate-binding positions include 67-68 (GG), R89, and N193.

It belongs to the acetylglutamate kinase family. ArgB subfamily.

It is found in the cytoplasm. The catalysed reaction is N-acetyl-L-glutamate + ATP = N-acetyl-L-glutamyl 5-phosphate + ADP. The protein operates within amino-acid biosynthesis; L-arginine biosynthesis; N(2)-acetyl-L-ornithine from L-glutamate: step 2/4. Functionally, catalyzes the ATP-dependent phosphorylation of N-acetyl-L-glutamate. This chain is Acetylglutamate kinase, found in Desulfitobacterium hafniense (strain DSM 10664 / DCB-2).